We begin with the raw amino-acid sequence, 810 residues long: Protein kinase C-binding protein NELL1 (810 aa).

A signal peptide spans 1-21; it reads MPMDVILVLWFCVCTARTVLG. 6 N-linked (GlcNAc...) asparagine glycosylation sites follow: N40, N53, N83, N224, N294, and N372. Positions 57–227 constitute a Laminin G-like domain; that stretch reads AFLFQDVQRE…TQCPNLNRTC (171 aa). The VWFC 1 domain occupies 271–332; sequence KTCQVSGLLY…ISGQCCKVCR (62 aa). Cystine bridges form between C395-C407, C401-C416, and C418-C432. Residues D434, I435, and E437 each coordinate Ca(2+). The region spanning 434–475 is the EGF-like 1; calcium-binding domain; that stretch reads DIDECAAKMHYCHANTVCVNLPGLYRCDCVPGYIRVDDFSCT. Intrachain disulfides connect C438/C451, C445/C460, C462/C474, C480/C493, C487/C502, C504/C515, C519/C529, C523/C535, C537/C546, C553/C566, C560/C575, C577/C594, C600/C613, C607/C622, and C624/C630. 3 residues coordinate Ca(2+): N453, L454, and L457. Positions 476 to 516 constitute an EGF-like 2; calcium-binding domain; it reads EHDDCGSGQHNCDKNAICTNTVQGHSCTCQPGYVGNGTICK. Residue N511 is glycosylated (N-linked (GlcNAc...) asparagine). The EGF-like 3 domain occupies 517–547; that stretch reads AFCEEGCRYGGTCVAPNKCVCPSGFTGSHCE. The EGF-like 4; calcium-binding domain occupies 549-587; sequence DIDECAEGFVECHNHSRCVNLPGWYHCECRSGFHDDGTY. A glycan (N-linked (GlcNAc...) asparagine) is linked at N562. An EGF-like 5; calcium-binding domain is found at 596–631; that stretch reads DIDECALRTHTCWNDSACINLAGGFDCLCPSGPSCS. N609 carries an N-linked (GlcNAc...) asparagine glycan. 2 consecutive VWFC domains span residues 632–687 and 692–750; these read GDCP…PECD and SQCL…PRCV. An N-linked (GlcNAc...) asparagine glycan is attached at N708.

In terms of assembly, interacts with ATRAID; the interaction promotes osteoblast cell differentiation and mineralization. Homotrimer. Binds to PKC beta-1. Interacts with ROBO3.

Its subcellular location is the cytoplasm. The protein localises to the nucleus envelope. It is found in the secreted. In terms of biological role, plays a role in the control of cell growth and differentiation. Promotes osteoblast cell differentiation and terminal mineralization. In Rattus norvegicus (Rat), this protein is Protein kinase C-binding protein NELL1 (Nell1).